Reading from the N-terminus, the 218-residue chain is tRNA (guanine-N(7)-)-methyltransferase (218 aa).

Residues 1–25 (MRLKNKPWANELVEEHPESALDRPN) form a disordered region. Basic and acidic residues predominate over residues 13 to 25 (VEEHPESALDRPN). S-adenosyl-L-methionine-binding residues include E45, E70, D97, and D119. The active site involves D119. Residue K123 coordinates substrate. The tract at residues 125-130 (RHEKRR) is interaction with RNA. Residues D155 and 195-198 (TEYE) contribute to the substrate site.

The protein belongs to the class I-like SAM-binding methyltransferase superfamily. TrmB family.

The catalysed reaction is guanosine(46) in tRNA + S-adenosyl-L-methionine = N(7)-methylguanosine(46) in tRNA + S-adenosyl-L-homocysteine. It functions in the pathway tRNA modification; N(7)-methylguanine-tRNA biosynthesis. Functionally, catalyzes the formation of N(7)-methylguanine at position 46 (m7G46) in tRNA. This is tRNA (guanine-N(7)-)-methyltransferase from Lactobacillus delbrueckii subsp. bulgaricus (strain ATCC BAA-365 / Lb-18).